A 556-amino-acid chain; its full sequence is Formate--tetrahydrofolate ligase (556 aa).

65-72 is a binding site for ATP; it reads TPAGEGKS.

This sequence belongs to the formate--tetrahydrofolate ligase family.

The catalysed reaction is (6S)-5,6,7,8-tetrahydrofolate + formate + ATP = (6R)-10-formyltetrahydrofolate + ADP + phosphate. It participates in one-carbon metabolism; tetrahydrofolate interconversion. In Clostridium perfringens (strain SM101 / Type A), this protein is Formate--tetrahydrofolate ligase.